The following is a 249-amino-acid chain: 1-(5-phosphoribosyl)-5-[(5-phosphoribosylamino)methylideneamino] imidazole-4-carboxamide isomerase (249 aa).

Asp11 serves as the catalytic Proton acceptor. Asp133 functions as the Proton donor in the catalytic mechanism.

The protein belongs to the HisA/HisF family.

The protein resides in the cytoplasm. The enzyme catalyses 1-(5-phospho-beta-D-ribosyl)-5-[(5-phospho-beta-D-ribosylamino)methylideneamino]imidazole-4-carboxamide = 5-[(5-phospho-1-deoxy-D-ribulos-1-ylimino)methylamino]-1-(5-phospho-beta-D-ribosyl)imidazole-4-carboxamide. Its pathway is amino-acid biosynthesis; L-histidine biosynthesis; L-histidine from 5-phospho-alpha-D-ribose 1-diphosphate: step 4/9. In Mannheimia succiniciproducens (strain KCTC 0769BP / MBEL55E), this protein is 1-(5-phosphoribosyl)-5-[(5-phosphoribosylamino)methylideneamino] imidazole-4-carboxamide isomerase.